The sequence spans 188 residues: Elongation factor P (188 aa).

Residue Lys-34 is modified to N6-(3,6-diaminohexanoyl)-5-hydroxylysine.

The protein belongs to the elongation factor P family. Post-translationally, may be beta-lysylated on the epsilon-amino group of Lys-34 by the combined action of EpmA and EpmB, and then hydroxylated on the C5 position of the same residue by EpmC (if this protein is present). Lysylation is critical for the stimulatory effect of EF-P on peptide-bond formation. The lysylation moiety may extend toward the peptidyltransferase center and stabilize the terminal 3-CCA end of the tRNA. Hydroxylation of the C5 position on Lys-34 may allow additional potential stabilizing hydrogen-bond interactions with the P-tRNA.

It localises to the cytoplasm. It functions in the pathway protein biosynthesis; polypeptide chain elongation. Functionally, involved in peptide bond synthesis. Alleviates ribosome stalling that occurs when 3 or more consecutive Pro residues or the sequence PPG is present in a protein, possibly by augmenting the peptidyl transferase activity of the ribosome. Modification of Lys-34 is required for alleviation. This is Elongation factor P from Xanthomonas campestris pv. campestris (strain B100).